Consider the following 891-residue polypeptide: MFKNRLTPILFALFIIVPALTYLLAYYTDWLFFVETGFASVFTTKLYAQTGIGVLFGGLLFAFLVPNLLYANRAEFPHAGEYIEAGAIRLQRNQTLPMIRPIGVLIAAGIALFVGQFGALQWENVLLFINRVSVGTTDPVIGKDIGFYLFSLPLLEILRGYLNFMLLATLLVTLLVYYIRGGIALTLRGLLIAQQVRRHTAILLALFSCVIAAGFYLEGFGLLYGNKGAFYGAGYVDVNVRLTTLTTLAFITPVAGLLLAFGLWKGTWRLVLLPPIVVVAAYMIGMRGYPALLQKFKVAPNELALETPYIEHNINFTRFGYDLKKIETVPFDVDTRLSAAEIANNDATIKNIRLWDHAPLLKTYSQLQQIRTYYKFFDVDNDRYMVNGQYSQVMLSPRELSYADLPSKNWINERLIFTHGNGITMGPVSRISKEGLPEFYIKDIPAVSLADIKVTRPEIYFGELSNDYVIVKTRVPEFSYPTATGNINTTYNGKGGVAVDSLLKKALFAAHFRTEKIVLSSDITSESRILYNRNISKRVKKLAPFLRFDADPYMVVDDKGKLKWIIDAYTHSYRLPYSKPLKGGINYMRNSVKAVVDAYDGAVDFYISDPDDVLLKVYAKIFPALFKPMAAMPDGLKTHVRYSHQFLQVQAAMFSTYHMTDPKVFYNKENLWEIPVLGEKQMEPYYTIMKLPGEKKEEYILLLPFSPSKRDNLAAWLTARCDGENYGKIKAYTFPRDRLIYGPKQIDARINQDSYISQQLTLWNQRGSEVIRGSMLVIPIEKSLLYVQPLFLAADKSGLPELRRVIVAFGDEVVMEETLELALQRIFGGKRPAAATATQSTAPDAKALPSTLAKEAMSLYERAINMQRQGNWSGYGEELRKLEQVLKQLAK.

A run of 7 helical transmembrane segments spans residues 6-26 (LTPI…LLAY), 51-71 (GIGV…LLYA), 102-122 (IGVL…ALQW), 164-184 (FMLL…GGIA), 202-222 (ILLA…GFGL), 244-264 (TLTT…FGLW), and 266-286 (GTWR…MIGM).

It belongs to the UPF0182 family.

The protein localises to the cell membrane. The sequence is that of UPF0182 protein Glov_0814 from Trichlorobacter lovleyi (strain ATCC BAA-1151 / DSM 17278 / SZ) (Geobacter lovleyi).